The primary structure comprises 590 residues: MGQIKKKHTAGAARNFITRTQAIRKLQVSLADFRRLCIFKGIYPREPRSKKKANKGSTAPVTFYYAKDIQYLLHEPVLDKFREHKTFAKKLTRALGRGDLHDAKRIDENRPRYHLDHIIKERYPTFMDALRDIDDALSMLFLFAALPASDDVSARLVSEAEAICTQWMAFVARERLVRKVFVSIKGVYYSANIRGVEVMWLVPFRFPQNIPADIDFRVMLTFLEFYTTLLHFVLYKLYNENGLVFPPIINSTKLSGVGGINAYVLESRQNAGVVPQIEGNSEAKVENVSAAVLSKAAKADAGEEEEVEEEEEVEDDGLDSFSAEKGDALAQPTFNSTAGQLFSNFTIFIGREVPLDIIEFLIIAFGGKVISESAMDELIDNEDETRGNVIDEKTLKQKFNLASVTHQITDRPTLREKVPGRTYVQPQWVFDSINEGKLLPVSEYAPGERLPAHLSPWGDAGTYDPTADVSDASDDDEDDEDIEVAPEDYDKDDEEEEAEAEAKQHQRELEAEAKGTKADPAAAPKKAKRKADKMTKAEKQEEEDKKLRMIMMSNKQKKLYKKMQYSNDKKSDREAELKKRRKLNEKKEKR.

Positions Ala-297–Leu-318 are disordered. Acidic residues predominate over residues Gly-302 to Leu-318. Residues Thr-337–Pro-446 enclose the BRCT domain. Residues Ala-452–Arg-590 are disordered. Residues Asp-471 to Glu-499 are compositionally biased toward acidic residues. A coiled-coil region spans residues Tyr-489 to Lys-589. 3 stretches are compositionally biased toward basic and acidic residues: residues Ala-500–Lys-517, Asp-532–Leu-547, and Asn-567–Leu-577.

It belongs to the pescadillo family. Component of the NOP7 complex, composed of ERB1, NOP7 and YTM1. The complex is held together by ERB1, which interacts with NOP7 via its N-terminal domain and with YTM1 via a high-affinity interaction between the seven-bladed beta-propeller domains of the 2 proteins. The NOP7 complex associates with the 66S pre-ribosome.

Its subcellular location is the nucleus. The protein resides in the nucleolus. It is found in the nucleoplasm. Its function is as follows. Component of the NOP7 complex, which is required for maturation of the 25S and 5.8S ribosomal RNAs and formation of the 60S ribosome. This chain is Pescadillo homolog, found in Yarrowia lipolytica (strain CLIB 122 / E 150) (Yeast).